A 258-amino-acid polypeptide reads, in one-letter code: Imidazole glycerol phosphate synthase subunit HisF (258 aa).

Residues aspartate 11 and aspartate 130 contribute to the active site.

It belongs to the HisA/HisF family. In terms of assembly, heterodimer of HisH and HisF.

The protein resides in the cytoplasm. The catalysed reaction is 5-[(5-phospho-1-deoxy-D-ribulos-1-ylimino)methylamino]-1-(5-phospho-beta-D-ribosyl)imidazole-4-carboxamide + L-glutamine = D-erythro-1-(imidazol-4-yl)glycerol 3-phosphate + 5-amino-1-(5-phospho-beta-D-ribosyl)imidazole-4-carboxamide + L-glutamate + H(+). Its pathway is amino-acid biosynthesis; L-histidine biosynthesis; L-histidine from 5-phospho-alpha-D-ribose 1-diphosphate: step 5/9. Its function is as follows. IGPS catalyzes the conversion of PRFAR and glutamine to IGP, AICAR and glutamate. The HisF subunit catalyzes the cyclization activity that produces IGP and AICAR from PRFAR using the ammonia provided by the HisH subunit. This Azorhizobium caulinodans (strain ATCC 43989 / DSM 5975 / JCM 20966 / LMG 6465 / NBRC 14845 / NCIMB 13405 / ORS 571) protein is Imidazole glycerol phosphate synthase subunit HisF.